We begin with the raw amino-acid sequence, 252 residues long: NAD-dependent protein deacetylase (252 aa).

Residues 1–248 enclose the Deacetylase sirtuin-type domain; it reads MYLVEEAKKV…PEVISHIQSL (248 aa). 8 residues coordinate NAD(+): alanine 26, threonine 30, phenylalanine 37, arginine 38, glutamine 102, valine 104, aspartate 105, and histidine 120. Residue phenylalanine 37 participates in nicotinamide binding. Nicotinamide is bound by residues valine 104 and aspartate 105. Histidine 120 functions as the Proton acceptor in the catalytic mechanism. Residues cysteine 128, cysteine 131, cysteine 153, and cysteine 155 each contribute to the Zn(2+) site. Residues serine 191, serine 192, asparagine 216, and isoleucine 234 each coordinate NAD(+).

It belongs to the sirtuin family. Class U subfamily. The cofactor is Zn(2+).

It is found in the cytoplasm. It carries out the reaction N(6)-acetyl-L-lysyl-[protein] + NAD(+) + H2O = 2''-O-acetyl-ADP-D-ribose + nicotinamide + L-lysyl-[protein]. NAD-dependent protein deacetylase which modulates the activities of several enzymes which are inactive in their acetylated form. Deacetylates the N-terminal lysine residue of Alba, the major archaeal chromatin protein and that, in turn, increases Alba's DNA binding affinity, thereby repressing transcription. In Sulfolobus acidocaldarius (strain ATCC 33909 / DSM 639 / JCM 8929 / NBRC 15157 / NCIMB 11770), this protein is NAD-dependent protein deacetylase.